The primary structure comprises 275 residues: 3-methyl-2-oxobutanoate hydroxymethyltransferase (275 aa).

2 residues coordinate Mg(2+): Asp-49 and Asp-88. Residues 49–50 (DS), Asp-88, and Lys-118 each bind 3-methyl-2-oxobutanoate. Glu-120 contacts Mg(2+). Glu-187 acts as the Proton acceptor in catalysis.

This sequence belongs to the PanB family. Homodecamer; pentamer of dimers. It depends on Mg(2+) as a cofactor.

The protein localises to the cytoplasm. The catalysed reaction is 3-methyl-2-oxobutanoate + (6R)-5,10-methylene-5,6,7,8-tetrahydrofolate + H2O = 2-dehydropantoate + (6S)-5,6,7,8-tetrahydrofolate. It participates in cofactor biosynthesis; (R)-pantothenate biosynthesis; (R)-pantoate from 3-methyl-2-oxobutanoate: step 1/2. Functionally, catalyzes the reversible reaction in which hydroxymethyl group from 5,10-methylenetetrahydrofolate is transferred onto alpha-ketoisovalerate to form ketopantoate. The protein is 3-methyl-2-oxobutanoate hydroxymethyltransferase of Hyphomonas neptunium (strain ATCC 15444).